We begin with the raw amino-acid sequence, 470 residues long: MFSLRNLPSLAPFVSAYASLTGYVMMIKPFLEMTIPPPLQNYMISYLNSFLHSTPSTLTLIIDDHIKNGMYNELYGAAQVYISTKVNHNAERLRISRDRSEKNVNIHFSVGEVVSDIYQGIEVKWRFCVDSNKSNMVHYFGEHFKLNPDRECVELSFEKKHTELVLNSYIPYVESKAKVINNERKILKMYSYCCMYLKWQSVNLEHPSTFDTMAMNEELKRSVMGDLDRFIRRKDFYKRVGKPWKRGYLLYGPPGTGKTSLVAAIANYLKFDIYDLQLASVREDADLRRLLLGTTNSSILLVEDIDCAVDLHTRLQPKTQDDTKGSSMLTLSGLLTCIDGLWSSCGDERIVIFTTTHKERLDPALLRPGRMDMHIHMGHCCFDVFKTLASNYLGLSHDDPHHLYPEIERLIKGEVLTPAQVAEELMKNEDPDVALEGLVKVLKRKRLELEKYDGETGRGGLRKPELQFFL.

Residues 1–18 form the signal peptide; that stretch reads MFSLRNLPSLAPFVSAYA. 252-259 lines the ATP pocket; sequence GPPGTGKT.

This sequence belongs to the AAA ATPase family. BCS1 subfamily. Mg(2+) is required as a cofactor.

The catalysed reaction is ATP + H2O = ADP + phosphate + H(+). The polypeptide is AAA-ATPase At5g17730 (Arabidopsis thaliana (Mouse-ear cress)).